We begin with the raw amino-acid sequence, 612 residues long: ETS-related transcription factor Elf-1 (612 aa).

A phosphoserine mark is found at Ser-110, Ser-163, Ser-167, and Ser-168. Positions 156 to 169 (VQETNADSPGASSP) are enriched in polar residues. A disordered region spans residues 156–199 (VQETNADSPGASSPEQRKRKKGRKTKPPRPDSPTTTPNISVKKK). Basic residues predominate over residues 172–182 (RKRKKGRKTKP). At Ser-187 the chain carries Phosphoserine. Thr-190 bears the Phosphothreonine mark. Positions 208 to 290 (IYLWEFLLAL…EGQRLVYQFK (83 aa)) form a DNA-binding region, ETS. The disordered stretch occupies residues 300-361 (DDEDPSSSIE…AANPKDPVEV (62 aa)). Low complexity predominate over residues 305–322 (SSSIESSDQSLSSTTASS). The span at 323-335 (RNQANRSRVSSSP) shows a compositional bias: polar residues. Ser-431 is subject to Phosphoserine. Residues 562-577 (EVEKKAEDDLNEDAEK) are compositionally biased toward basic and acidic residues. A disordered region spans residues 562-586 (EVEKKAEDDLNEDAEKSAQQPQPYV).

The protein belongs to the ETS family. In terms of assembly, binds to the underphosphorylated form of RB. May interact with other transcription factors in order to regulate specific genes. Interacts with RUNX1. Interacts with SP1; the interaction is inhibited by glycosylation of SP1. As to expression, predominantly found in hematopoietic cells. Detected in other cell types such as fibroblasts.

The protein localises to the nucleus. Functionally, transcription factor that activates the LYN and BLK promoters. This Mus musculus (Mouse) protein is ETS-related transcription factor Elf-1 (Elf1).